The chain runs to 146 residues: Large ribosomal subunit protein uL15 (146 aa).

A compositionally biased stretch (basic and acidic residues) spans 1 to 18; it reads MKLHELKPSEGSRKERNR. The segment at 1-50 is disordered; the sequence is MKLHELKPSEGSRKERNRVGRGTGSGNGKTSGRGHKGQKARSGGGVRLGF. Gly residues predominate over residues 21–31; it reads RGTGSGNGKTS.

This sequence belongs to the universal ribosomal protein uL15 family. As to quaternary structure, part of the 50S ribosomal subunit.

In terms of biological role, binds to the 23S rRNA. The sequence is that of Large ribosomal subunit protein uL15 from Listeria innocua serovar 6a (strain ATCC BAA-680 / CLIP 11262).